The primary structure comprises 577 residues: Thrombomodulin (577 aa).

Positions 1-16 (MLGIFFLGVLAPASLG) are cleaved as a signal peptide. Topologically, residues 17-517 (LSALAKLQPT…GPPSARPVHS (501 aa)) are extracellular. Positions 31–167 (VEHECFALFQ…TETQGFLCEF (137 aa)) constitute a C-type lectin domain. N-linked (GlcNAc...) asparagine glycosylation is present at Asn-113. The cysteines at positions 135 and 156 are disulfide-linked. EGF-like domains are found at residues 240–280 (GAWN…RSCA) and 283–323 (VVQS…HRCE). Asn-243 carries N-linked (GlcNAc...) asparagine glycosylation. 18 disulfide bridges follow: Cys-244/Cys-255, Cys-251/Cys-264, Cys-266/Cys-279, Cys-287/Cys-295, Cys-291/Cys-307, Cys-309/Cys-322, Cys-328/Cys-339, Cys-335/Cys-348, Cys-350/Cys-361, Cys-368/Cys-377, Cys-373/Cys-387, Cys-389/Cys-403, Cys-407/Cys-416, Cys-412/Cys-424, Cys-426/Cys-438, Cys-444/Cys-454, Cys-449/Cys-463, and Cys-465/Cys-479. N-linked (GlcNAc...) asparagine glycosylation is present at Asn-256. The 39-residue stretch at 324-362 (DVDDCKQGPNPCPQLCVNTKGGFECFCYDGYELVDGECV) folds into the EGF-like 3; calcium-binding domain. 2 consecutive EGF-like domains span residues 364–404 (LLDP…HKCE) and 403–439 (CEMFCNETSCPADCDPNSPTVCECPEGFILDEGSVCT). An N-linked (GlcNAc...) asparagine glycan is attached at Asn-408. The EGF-like 6; calcium-binding domain occupies 440–480 (DIDECSQGECFTSECRNFPGSYECICGPDTALAGQISKDCD). The segment at 476-513 (SKDCDPIPVREDTKEEEGSGEPPVSPTPGSPTGPPSAR) is disordered. The span at 477–492 (KDCDPIPVREDTKEEE) shows a compositional bias: basic and acidic residues. O-linked (Xyl...) (chondroitin sulfate) serine glycosylation is present at Ser-494. Over residues 498–512 (PVSPTPGSPTGPPSA) the composition is skewed to pro residues. Residues 518–541 (GVLIGISIASLSLVVALLALLCHL) traverse the membrane as a helical segment. Over 542–577 (RKKQGAARAELEYKCASSAKEVVLQHVRTDRTLQKF) the chain is Cytoplasmic.

Interacts with ITGAL, ITGAM and ITGB2. Interacts with thrombin/F2; this interaction switches the specificity of thrombin from a procoagulant to an anticoagulant and antifibrinolytic protease. Interacts with ANGP1 and ANGP2; these interactions significantly inhibit the generation of activated PC and TAFIa/CPB2 by the thrombin/thrombomodulin complex. Interacts with PF4; this interaction enhances generation of activated protein C. Interacts with HMGB1; this interaction inhibits HMGB1 inflammatory activity. In terms of tissue distribution, endothelial cells are unique in synthesizing thrombomodulin.

The protein localises to the membrane. Its function is as follows. Endothelial cell receptor that plays a critical role in regulating several physiological processes including hemostasis, coagulation, fibrinolysis, inflammation, and angiogenesis. Acts as a cofactor for thrombin activation of protein C/PROC on the surface of vascular endothelial cells leading to initiation of the activated protein C anticoagulant pathway. Also accelerates the activation of the plasma carboxypeptidase B2/CPB2, which catalyzes removal of C-terminal basic amino acids from its substrates including kinins or anaphylatoxins leading to fibrinolysis inhibition. Plays critical protective roles in changing the cleavage specificity of protease-activated receptor 1/PAR1, inhibiting endothelial cell permeability and inflammation. Suppresses inflammation distinctly from its anticoagulant cofactor activity by sequestering HMGB1 thereby preventing it from engaging cellular receptors such as RAGE and contributing to the inflammatory response. The polypeptide is Thrombomodulin (Thbd) (Mus musculus (Mouse)).